Consider the following 599-residue polypeptide: Elongation factor 4 (599 aa).

The 184-residue stretch at 2–185 (KYIRNFSIIA…RIIIDIPVPQ (184 aa)) folds into the tr-type G domain. GTP-binding positions include 14–19 (NHGKST) and 132–135 (NKID).

It belongs to the TRAFAC class translation factor GTPase superfamily. Classic translation factor GTPase family. LepA subfamily.

Its subcellular location is the cell inner membrane. It catalyses the reaction GTP + H2O = GDP + phosphate + H(+). Required for accurate and efficient protein synthesis under certain stress conditions. May act as a fidelity factor of the translation reaction, by catalyzing a one-codon backward translocation of tRNAs on improperly translocated ribosomes. Back-translocation proceeds from a post-translocation (POST) complex to a pre-translocation (PRE) complex, thus giving elongation factor G a second chance to translocate the tRNAs correctly. Binds to ribosomes in a GTP-dependent manner. The chain is Elongation factor 4 from Blochmanniella floridana.